The following is a 241-amino-acid chain: CNKLKLDKAERGDKASVDNTELLKWLDLWEPGSVIYACLGSISGLTSWQLAELGLGLESTNQPFIWVIREGEKSEGLEKWILEEGYEERKRKREDFWIRGWSPQVLILSHPAIGAFFTHCGWNSTLEGISAGVPIVACPLFAEQFYNEKLVVEVLGIGVSVGVEAAVTWGLEDKCGAVMKKEQVKKAIEIVMDKGKEGEERRRRAREIGEMAKRTIEEGGSSYLDMEMLIQYVSERSPSRA.

The UDP-alpha-D-glucose site is built by Gln-104, His-119, Trp-122, Asn-123, Ser-124, and Glu-127. Position 142 (Ala-142) interacts with an anthocyanidin. Positions 143 and 144 each coordinate UDP-alpha-D-glucose.

It belongs to the UDP-glycosyltransferase family. In terms of tissue distribution, faintly expressed in cotyledons, roots and leaves.

It catalyses the reaction an anthocyanidin + UDP-alpha-D-glucose + H(+) = an anthocyanidin 3-O-beta-D-glucoside + UDP. It participates in pigment biosynthesis; anthocyanin biosynthesis. In the presence of other necessary color factors, this glycosylation reaction allows the accumulation of anthocyanin pigments. The protein is Anthocyanidin 3-O-glucosyltransferase 4 (GT4) of Manihot esculenta (Cassava).